The sequence spans 553 residues: Protein spartin (553 aa).

The MIT domain occupies 15-96; that stretch reads IRTAYKAAMT…ETELRYRLKV (82 aa). The tract at residues 105–130 is disordered; the sequence is DDSAVEATEESRAEMDTKRPPLLAEN. The segment covering 113–123 has biased composition (basic and acidic residues); the sequence is EESRAEMDTKR. The region spanning 325 to 509 is the Senescence domain; that stretch reads IVSAADFIAS…SQNVNYITPK (185 aa).

In terms of assembly, interacts with Eps-15 (via C-terminal region); the interaction is required for spartin localization to the NMJ presynaptic membrane. As to expression, expressed in larval brain, ventral nerve cord and neuropil (at protein level).

It is found in the presynaptic cell membrane. The protein localises to the early endosome. Its subcellular location is the lipid droplet. Functionally, during postembryonic development, functions with endocytic adapter Eps-15 in neurons to restrain synaptic growth, by inhibiting BMP signaling, and to control synaptic endocytosis. Required presynaptically for neuromuscular junction (NMJ) neurotransmission. Inhibits neuronal BMP signaling by promoting endocytic internalization and subsequent endosomal trafficking of the BMP receptor wit. In this way, regulates the Fmr1 translational regulator controlling Futsch expression to modulate neuronal microtubule stability, which controls both synaptogenesis and neuronal survival. The chain is Protein spartin from Drosophila melanogaster (Fruit fly).